The sequence spans 616 residues: 2-isopropylmalate synthase (616 aa).

Positions 1 to 34 (MSPNDAFISAPAKIETPVGPRNEGQPAWNKQRGS) are disordered. One can recognise a Pyruvate carboxyltransferase domain in the interval 67–341 (PQWCAVDLRD…DPQLDFTDIR (275 aa)). Positions 76, 280, 282, and 316 each coordinate Mg(2+). The regulatory domain stretch occupies residues 490 to 616 (RTAPVEQIAL…NHEAVLAGGV (127 aa)).

Belongs to the alpha-IPM synthase/homocitrate synthase family. LeuA type 2 subfamily. In terms of assembly, homodimer. Mg(2+) is required as a cofactor.

The protein localises to the cytoplasm. The catalysed reaction is 3-methyl-2-oxobutanoate + acetyl-CoA + H2O = (2S)-2-isopropylmalate + CoA + H(+). It functions in the pathway amino-acid biosynthesis; L-leucine biosynthesis; L-leucine from 3-methyl-2-oxobutanoate: step 1/4. Its function is as follows. Catalyzes the condensation of the acetyl group of acetyl-CoA with 3-methyl-2-oxobutanoate (2-ketoisovalerate) to form 3-carboxy-3-hydroxy-4-methylpentanoate (2-isopropylmalate). The protein is 2-isopropylmalate synthase of Corynebacterium glutamicum (strain R).